We begin with the raw amino-acid sequence, 151 residues long: Cytochrome c-type biogenesis protein CcmE 2 (151 aa).

The Cytoplasmic portion of the chain corresponds to 1–8 (MNPLRKKR). A helical; Signal-anchor for type II membrane protein transmembrane segment spans residues 9 to 29 (LVIILAILVGVGAAVGLALSA). Over 30–151 (LQQNINLFYT…QSAPAPGKEG (122 aa)) the chain is Periplasmic. The heme site is built by H124 and Y128.

It belongs to the CcmE/CycJ family.

Its subcellular location is the cell inner membrane. Heme chaperone required for the biogenesis of c-type cytochromes. Transiently binds heme delivered by CcmC and transfers the heme to apo-cytochromes in a process facilitated by CcmF and CcmH. The chain is Cytochrome c-type biogenesis protein CcmE 2 from Pseudomonas fluorescens (strain Pf0-1).